The chain runs to 118 residues: Iron-sulfur cluster assembly protein CyaY (118 aa).

This sequence belongs to the frataxin family.

In terms of biological role, involved in iron-sulfur (Fe-S) cluster assembly. May act as a regulator of Fe-S biogenesis. The sequence is that of Iron-sulfur cluster assembly protein CyaY from Buchnera aphidicola subsp. Baizongia pistaciae (strain Bp).